The following is a 205-amino-acid chain: MYQIPVLSPSGRRELAADLPAEINPHLLWEVVRWQLAKRRRGTASTKTRGEVAYSGRKIWPQKHTGRARHGDIGAPIFVGGGVVFGPKPRDYSYTLPKKVRKKGLAMAVADRAREGKLLLVEAFAGVNGKTKEFLAWAKEAGLDGSESVLLVTGNELVRRAARNLPWVVTLAPEGLNVYDIVRTERLVMDLDAWEVFQNRIGGEA.

The protein belongs to the universal ribosomal protein uL4 family. In terms of assembly, part of the 50S ribosomal subunit.

Functionally, one of the primary rRNA binding proteins, this protein initially binds near the 5'-end of the 23S rRNA. It is important during the early stages of 50S assembly. It makes multiple contacts with different domains of the 23S rRNA in the assembled 50S subunit and ribosome. Forms part of the polypeptide exit tunnel. In Thermus thermophilus (strain ATCC BAA-163 / DSM 7039 / HB27), this protein is Large ribosomal subunit protein uL4.